Consider the following 284-residue polypeptide: MEMO1 family protein MmarC6_1286 (284 aa).

It belongs to the MEMO1 family.

The sequence is that of MEMO1 family protein MmarC6_1286 from Methanococcus maripaludis (strain C6 / ATCC BAA-1332).